The primary structure comprises 293 residues: Protease HtpX (293 aa).

The next 2 membrane-spanning stretches (helical) occupy residues 4–24 and 34–54; these read IALF…VLSL and GLMI…LLMS. Residue histidine 139 coordinates Zn(2+). Glutamate 140 is a catalytic residue. Histidine 143 contacts Zn(2+). 2 helical membrane-spanning segments follow: residues 158–178 and 193–213; these read IVNT…AGFL and MVYF…ASII. Glutamate 222 contacts Zn(2+).

The protein belongs to the peptidase M48B family. The cofactor is Zn(2+).

The protein resides in the cell inner membrane. The protein is Protease HtpX of Yersinia enterocolitica serotype O:8 / biotype 1B (strain NCTC 13174 / 8081).